Here is a 465-residue protein sequence, read N- to C-terminus: Gamma-aminobutyric acid receptor subunit rho-2 (465 aa).

The signal sequence occupies residues 1-20 (MPYFSRLILFLFCLVVLVES). The Extracellular segment spans residues 21–260 (RKPKKRRWTG…LYINFTLRRH (240 aa)). Arginine 105 contacts 4-aminobutanoate. The N-linked (GlcNAc...) asparagine glycan is linked to asparagine 120. Serine 169 contacts 4-aminobutanoate. The cysteines at positions 178 and 192 are disulfide-linked. Glutamate 197 is a 4-aminobutanoate binding site. N-linked (GlcNAc...) asparagine glycosylation occurs at asparagine 254. The helical transmembrane segment at 261–281 (IFFFLLQTYFPATLMVMLSWV) threads the bilayer. Over 282-293 (SFWIDRRAVPAR) the chain is Cytoplasmic. A helical transmembrane segment spans residues 294 to 314 (VSLGITTVLTMSTIITGVNAS). The Extracellular segment spans residues 315–325 (MPRVSYIKAVD). Residues 326–346 (IYLWVSFVFVFLSVLEYAAVN) form a helical membrane-spanning segment. At 347 to 444 (YLTTVQERKE…FQNTHAIDKY (98 aa)) the chain is on the cytoplasmic side. A helical transmembrane segment spans residues 445 to 465 (SRLIFPASYIFFNLIYWSVFA).

Belongs to the ligand-gated ion channel (TC 1.A.9) family. Gamma-aminobutyric acid receptor (TC 1.A.9.5) subfamily. GABRR2 sub-subfamily. As to quaternary structure, three rho subunits (rho-1/GBRR1, rho-2/GBRR2 and rho-3/GBRR3) coassemble either to form functional homopentamers or heteropentamers. Rho-2 is unable to form a functional homopentamer. Interacts with SQSTM1.

It localises to the postsynaptic cell membrane. It is found in the cell membrane. It carries out the reaction chloride(in) = chloride(out). Rho subunit of the pentameric ligand-gated chloride channels responsible for mediating the effects of gamma-aminobutyric acid (GABA), the major inhibitory neurotransmitter in the brain. Rho-containing GABA-gated chloride channels are a subclass of GABA(A) receptors (GABAARs) entirely composed of rho subunits, where GABA molecules bind at the rho intersubunit interfaces. When activated by GABA, rho-GABAARs selectively allow the flow of chloride anions across the cell membrane down their electrochemical gradient. Rho-2 GABAARs may contribute to the regulation of glial development in the cerebellum by controlling extrasynaptic transmission. Rho-2 GABAARs are also involved in neuronal tonic (extrasynaptic) and phasic (synaptic) transmission in the Purkinje neurons of the cerebellum. Rho-2 GABAARs expressed in retina may play a role in retinal neurotransmission. The chain is Gamma-aminobutyric acid receptor subunit rho-2 (GABRR2) from Bos taurus (Bovine).